The following is a 190-amino-acid chain: Ribose 1,5-bisphosphate phosphokinase PhnN (190 aa).

The interval 135-159 is disordered; the sequence is RGREPEPGIGQRLARPDPAPGHQAD.

The protein belongs to the ribose 1,5-bisphosphokinase family.

It catalyses the reaction alpha-D-ribose 1,5-bisphosphate + ATP = 5-phospho-alpha-D-ribose 1-diphosphate + ADP. The protein operates within metabolic intermediate biosynthesis; 5-phospho-alpha-D-ribose 1-diphosphate biosynthesis; 5-phospho-alpha-D-ribose 1-diphosphate from D-ribose 5-phosphate (route II): step 3/3. Functionally, catalyzes the phosphorylation of ribose 1,5-bisphosphate to 5-phospho-D-ribosyl alpha-1-diphosphate (PRPP). The polypeptide is Ribose 1,5-bisphosphate phosphokinase PhnN (Pseudofrankia inefficax (strain DSM 45817 / CECT 9037 / DDB 130130 / EuI1c) (Frankia inefficax)).